The primary structure comprises 947 residues: Protocadherin alpha-4 (947 aa).

Residues 1 to 29 form the signal peptide; sequence MEFSWGSGQESRRLLLLLLLLAAWEAGNG. Cadherin domains follow at residues 30 to 133, 134 to 242, 243 to 350, 351 to 455, 456 to 565, and 588 to 678; these read QLHY…PPVF, PATQ…APAF, DRTI…VPDL, EFKS…APAF, AQPE…APAL, and GHVV…APKA. Residues 30–697 are Extracellular-facing; sequence QLHYSVSEEA…GPDAALVDVN (668 aa). C96 and C102 are joined by a disulfide. Residues N139, N257, and N265 are each glycosylated (N-linked (GlcNAc...) asparagine). A glycan (N-linked (GlcNAc...) asparagine) is linked at N548. Residues 698 to 718 traverse the membrane as a helical segment; sequence VYLIIAICAVSSLLVLTLLLY. The Cytoplasmic segment spans residues 719-947; the sequence is TALRCSALPT…GNSTTDNSDQ (229 aa). 6 PXXP repeats span residues 734–737, 774–777, 796–799, 829–832, 870–873, and 888–891; these read PGKP, PSLP, PRQP, PGGP, PGNP, and PGSP. Residues 734–891 are 6 X 4 AA repeats of P-X-X-P; it reads PGKPTLVCSS…PDKFIIPGSP (158 aa). Positions 738–947 are required for interaction with FYN; it reads TLVCSSAVGS…GNSTTDNSDQ (210 aa). Disordered stretches follow at residues 754–805, 828–853, and 868–947; these read RRPR…DWRY, GPGGPDQQWPTVSSATPEPEAGEVSP, and YGPG…NSDQ. A compositionally biased stretch (basic and acidic residues) spans 906-920; sequence DKSDFITFGKKEETK.

Forms homodimers in trans (molecules expressed by two different cells). Forms promiscuous heterodimers in cis (at the plasma membrane of the same cell) with other protocadherins. Interacts with FYN.

It is found in the cell membrane. Calcium-dependent cell-adhesion protein involved in cells self-recognition and non-self discrimination. Thereby, it is involved in the establishment and maintenance of specific neuronal connections in the brain. The sequence is that of Protocadherin alpha-4 from Homo sapiens (Human).